Reading from the N-terminus, the 608-residue chain is ATP-binding protein Uup (608 aa).

ABC transporter domains follow at residues 7–217 and 285–512; these read APVL…AADA and VEAK…FAPV. Residues 42-49 and 317-324 contribute to the ATP site; these read GRNGAGKS and GPNGAGKT. Residues 522-608 form a C-terminal domain (CTD), binds DNA region; that stretch reads AAPAAPKKSA…LEEKKENLAG (87 aa).

It belongs to the ABC transporter superfamily. ABCF family. Uup subfamily.

It localises to the cytoplasm. It catalyses the reaction ATP + H2O = ADP + phosphate + H(+). Functionally, probably plays a role in ribosome assembly or function. May be involved in resolution of branched DNA intermediates that result from template switching in postreplication gaps. Binds DNA and has ATPase activity. One of a cluster of genes involved in attachment of the holdfast to the cell. The holdfast is a structure that allows the bacteria to firmly adhere to surfaces. The chain is ATP-binding protein Uup from Caulobacter vibrioides (strain ATCC 19089 / CIP 103742 / CB 15) (Caulobacter crescentus).